Reading from the N-terminus, the 359-residue chain is DNA integrity scanning protein DisA (359 aa).

In terms of domain architecture, DAC spans 7-146 (DEVLRQTLAI…NRRYVLEGSD (140 aa)). Residues G74, L92, and 105–109 (TRHRT) contribute to the ATP site.

Belongs to the DisA family. Homooctamer. It depends on Mg(2+) as a cofactor.

The enzyme catalyses 2 ATP = 3',3'-c-di-AMP + 2 diphosphate. Functionally, participates in a DNA-damage check-point. DisA forms globular foci that rapidly scan along the chromosomes searching for lesions. In terms of biological role, also has diadenylate cyclase activity, catalyzing the condensation of 2 ATP molecules into cyclic di-AMP (c-di-AMP). c-di-AMP likely acts as a signaling molecule that may couple DNA integrity with a cellular process. The protein is DNA integrity scanning protein DisA of Kineococcus radiotolerans (strain ATCC BAA-149 / DSM 14245 / SRS30216).